Reading from the N-terminus, the 525-residue chain is Phosphatidylinositol 4-kinase alpha 2 (525 aa).

A pleckstrin homology (PH) domain conferring phosphoinositide binding specificity region spans residues 163–278; the sequence is SDVRQHIVDG…VKPQACIFKV (116 aa). A PI3K/PI4K catalytic domain is found at 239–509; that stretch reads VDSGIPLQSA…VCTDAYNKWT (271 aa). The tract at residues 245 to 251 is G-loop; it reads LQSAAKV. The interval 373–381 is catalytic loop; it reads QPKDRHNGN. Residues 392–417 form an activation loop region; it reads HIDFGFILETSPGGNMRFENAHFKLS.

It belongs to the PI3/PI4-kinase family. Type III PI4K subfamily.

It is found in the membrane. It carries out the reaction a 1,2-diacyl-sn-glycero-3-phospho-(1D-myo-inositol) + ATP = a 1,2-diacyl-sn-glycero-3-phospho-(1D-myo-inositol 4-phosphate) + ADP + H(+). In terms of biological role, acts on phosphatidylinositol (PtdIns) in the first committed step in the production of the second messenger inositol-1,4,5,-trisphosphate. This Arabidopsis thaliana (Mouse-ear cress) protein is Phosphatidylinositol 4-kinase alpha 2 (PI4KA2).